The chain runs to 274 residues: Lipid phosphate phosphatase 1 (274 aa).

At 1–15 (MISVMADEKHKEYFK) the chain is on the lumenal side. The chain crosses the membrane as a helical span at residues 16–33 (LYYFQYMIIGLCTILFLY). Over 34 to 69 (SEISLVPRGQNIEFSLDDPSISKRYVPNELVGPLEC) the chain is Cytoplasmic. The helical transmembrane segment at 70-87 (LILSVGLSNMVVFWTCMF) threads the bilayer. The Lumenal portion of the chain corresponds to 88 to 117 (DKDLLKKNRVKRLRERPDGISNDFHFMHTS). The chain crosses the membrane as a helical span at residues 118–139 (ILCLMLIISINAALTGALKLII). Positions 136–144 (KLIIGNLRP) are phosphatase sequence motif I. Topologically, residues 140-189 (GNLRPDFVDRCIPDLQKMSDSDSLVFGLDICKQTNKWILYEGLKSTPSGH) are cytoplasmic. The segment at 186–189 (PSGH) is phosphatase sequence motif II. A helical membrane pass occupies residues 190–203 (SSFIVSTMGFTYLW). The Lumenal portion of the chain corresponds to 204–214 (QRVFTTRNTRS). The chain crosses the membrane as a helical span at residues 215–231 (CIWCPLLALVVMVSRVI). The interval 228 to 239 (SRVIDHRHHWYD) is phosphatase sequence motif III. At 232–237 (DHRHHW) the chain is on the cytoplasmic side. The helical transmembrane segment at 238 to 255 (YDVVSGAVLAFLVIYCCW) threads the bilayer. Residues 256 to 274 (KWTFTNLAKRDILPSPVSV) lie on the Lumenal side of the membrane.

It belongs to the PA-phosphatase related phosphoesterase family.

The protein resides in the golgi apparatus membrane. It catalyses the reaction a 1,2-diacyl-sn-glycerol 3-diphosphate + H2O = a 1,2-diacyl-sn-glycero-3-phosphate + phosphate + H(+). The catalysed reaction is a 1,2-diacyl-sn-glycero-3-phosphate + H2O = a 1,2-diacyl-sn-glycerol + phosphate. The enzyme catalyses a 1-acyl-sn-glycero-3-phosphate + H2O = a 1-acyl-sn-glycerol + phosphate. Its activity is regulated as follows. PA phosphatase activity is magnesium ion-independent and potently inhibited by N-ethylmaleimide. Also inhibited by phenylglyoxal and propranolol. Catalyzes the dephosphorylation of diacylglycerol diphosphate (DGPP) to phosphatidate (PA) and the subsequent dephosphorylation of PA to diacylglycerol (DAG). Together with DPP1, regulates intracellular DGPP and PA levels which are phospholipid molecules believed to play a signaling role in stress response. Can also use lysophosphatidic acid (LPA) as a substrate. Substrate preference is PA &gt; DGPP &gt; LPA. This Saccharomyces cerevisiae (strain ATCC 204508 / S288c) (Baker's yeast) protein is Lipid phosphate phosphatase 1 (LPP1).